A 254-amino-acid chain; its full sequence is UPF0328 protein ECU01_0070/ECU01_1540/ECU02_1570/ECU04_0080/ECU08_2100 (254 aa).

It belongs to the UPF0328 family.

In Encephalitozoon cuniculi (strain GB-M1) (Microsporidian parasite), this protein is UPF0328 protein ECU01_0070/ECU01_1540/ECU02_1570/ECU04_0080/ECU08_2100.